The primary structure comprises 361 residues: Terpene synthase 6 (361 aa).

The DDxx(x)D/E motif motif lies at 81-86 (DDVLDA). Positions 223–231 (NDLVSYEKE) match the NDxxSxxxD/E motif motif.

This sequence belongs to the terpene synthase family.

It catalyses the reaction (2E,6E)-farnesyl diphosphate = (2S,3R,6S,9S)-(-)-protoillud-7-ene + diphosphate. In terms of biological role, terpene synthase that converts its substrate farnesyl diphosphate (FPP) into the sesquiterpene (2S,3R,6S,9S)-(-)-protoillud-7-ene. The sequence is that of Terpene synthase 6 from Dictyostelium discoideum (Social amoeba).